The sequence spans 645 residues: Chlorophyllide a oxygenase, chloroplastic (645 aa).

Residues 1–46 (MLPASLQRKAAAVGGRGPTNQSRVAVRVSAQPKEAPPASTPIVEDP) form a disordered region. Positions 105–218 (QARQKLEYLR…RKASDLDIKE (114 aa)) form a coiled coil. Residues 258–287 (ATTVTQEVPSTSYGTPVDRAPRRSKAAIRR) are disordered. Positions 259–271 (TTVTQEVPSTSYG) are enriched in polar residues. The Rieske domain occupies 305–406 (WYPAEFSARL…CAEKDGFIWV (102 aa)). [2Fe-2S] cluster contacts are provided by Cys346, His348, Cys365, and His368. Fe cation is bound by residues Glu446, Asp450, His453, and His458.

Its subcellular location is the plastid. It localises to the chloroplast inner membrane. The protein resides in the chloroplast thylakoid membrane. It catalyses the reaction chlorophyllide a + 2 NADPH + 2 O2 + 2 H(+) = chlorophyllide b + 2 NADP(+) + 3 H2O. Catalyzes a two-step oxygenase reaction involved in the synthesis of chlorophyll b. Acts specifically on the non-esterified chlorophyllide a and not on chlorophyll a. This chain is Chlorophyllide a oxygenase, chloroplastic (CAO), found in Chlamydomonas reinhardtii (Chlamydomonas smithii).